Here is an 861-residue protein sequence, read N- to C-terminus: Benzylsuccinate synthase alpha subunit (861 aa).

One can recognise a PFL domain in the interval 40–712 (TERTRRLKAR…QAVGLYMEVG (673 aa)). A disordered region spans residues 718–744 (TPDGRFGGEAADDGGISPYSGTDKKGP). Residues 731 to 850 (GGISPYSGTD…IIARNEQNFN (120 aa)) enclose the Glycine radical domain. Glycine radical is present on Gly825.

The protein belongs to the glycyl radical enzyme (GRE) family. BSS subfamily. As to quaternary structure, heterohexamer composed of 2 alpha subunits, 2 beta subunits and 2 gamma subunits.

It catalyses the reaction toluene + fumarate = 2-benzylsuccinate. It participates in xenobiotic degradation; toluene degradation. Its activity is regulated as follows. Activated by the benzylsuccinate synthase activating enzyme BssD. Rapidly inactivated by oxygen. In terms of biological role, catalyzes the addition of fumarate to the methyl group of toluene, leading to the formation of benzylsuccinate. The sequence is that of Benzylsuccinate synthase alpha subunit (bssA) from Thauera aromatica.